Consider the following 613-residue polypeptide: Portal protein (613 aa).

The disordered stretch occupies residues 577–613 (ATGGDHGIRQAPSARGDTEPDHAKSKPARDPPPGAGS). The segment covering 592–605 (GDTEPDHAKSKPAR) has biased composition (basic and acidic residues).

Belongs to the herpesviridae portal protein family. Homododecamerizes. Interacts with terminase subunits TRM1 and TRM3.

It is found in the virion. It localises to the host nucleus. Its subcellular location is the host cytoplasm. In terms of biological role, forms a portal in the viral capsid through which viral DNA is translocated during DNA packaging. Assembles as a dodecamer at a single fivefold axe of the T=16 icosahedric capsid. Binds to the molecular motor that translocates the viral DNA, termed terminase. This is Portal protein from Epstein-Barr virus (strain B95-8) (HHV-4).